Consider the following 246-residue polypeptide: Proteasome subunit alpha type-5 (246 aa).

It belongs to the peptidase T1A family. As to quaternary structure, the 26S proteasome consists of a 20S proteasome core and two 19S regulatory subunits. The 20S proteasome core is composed of 28 subunits that are arranged in four stacked rings, resulting in a barrel-shaped structure. The two end rings are each formed by seven alpha subunits, and the two central rings are each formed by seven beta subunits. The catalytic chamber with the active sites is on the inside of the barrel.

The protein resides in the cytoplasm. It localises to the nucleus. In terms of biological role, the proteasome is a multicatalytic proteinase complex which is characterized by its ability to cleave peptides with Arg, Phe, Tyr, Leu, and Glu adjacent to the leaving group at neutral or slightly basic pH. The proteasome has an ATP-dependent proteolytic activity. This chain is Proteasome subunit alpha type-5, found in Trypanosoma brucei brucei.